The chain runs to 1537 residues: MKDFSKVRIAIASPAKIREWSFGEVEKPETINYRTLKPEREGLFDERIFGPIKDYECACGKYKRQRYEGKVCERCGVEVTSSKVRRYRMGHIDLATPAAHIWYVKDTPSKIGTLLDLSAAQLEKVLYFSSFLVTDPRNAQKDGRPLRRGELLSDDEYRELRFGRQETYTLPSGTEAAVRDGEYVTRGQVLGGNVVSKMDGLAQYRFPRRAEIAYAEEAEASLPLPSDVLVQQDSFRPGEILAELEGDVQITAPVDGTAFLLDMGEDSVLVELRDSAAEDAAQGEVLARVYIPHGMNVQVAEGEVVEAGSVLATAAAGDRLRVSRDSRLSNVNFPKKKGDVKVTAHWTRRVEYRIEPQMHVLVGDGSEVRKGQKVVGAIDKEEEVIAEADGVITLHAPASIIVSKARVYAYQDEPLVVNGDRVEPGDELADSGNLRSEISGRVEIDLVRKQVRVIESYDFEAKMGAEAVKELLDDLDLDQLEAELSEQMKDNSRHKRAKARKRLEVVRAFKRSGNHPSWMILETVPVMPPDLRPMVQVDGGRFATSDLNDLYRRLINRNNRLKKLIGQGAPDMIIRNEKRMLQEAVDALIDNGRRGSPVTNPGSDRSLRSLTDLLGGKQGRFRQNLLGKRVDYSGRSVIVVGPQLKLHQCGVPKRMALELFKPFLFKVLEEKGEVTNIKQARKMLERYRDTRDSVWDALEEVIEDKVVLLNRAPTLHRLGIQAFEPVLVEGQSIQLHPLVCEAFNADFDGDQMAIHVPLSAQAQAEARIQMLSAHNLLSPANGEPNVKPSRDIILGIFTLTQLRKDNLGAGSEFANEQDALKALDEGRVALNTPIRVNGVETSPGRLKYVFSSPDEAIMAVDRGEIDYQDHVRIRLNGTVYETSAGRVMFRRLVQEALGAQGHLVDTLVNLDTAYEKDSLKDMVMACYKELGIEATAGLLDALKDSGFKLSTISGITIGIDDIVLPPNKRELLAEADEKLAAIEQNYEFGFMTDEERYKQVVQLWNDTTDEVKNAVFENFSRNYPFNPLWIMSQSGARGNPQQIRQLAGMRGLMARPDGSTIEVPIRASFREGLTVLEYFISTHGARKGGADTALRTADSGYLTRKLVDVAHEVVVRDVDCGTTDYTVMPLGTTDERTGEWRTRKGSEIETAIYGRTLTADVELSDGRVIPAGQMLSLEDVKAITRDAKAIGEVFVRTPLNCRVRAGVCQKCYGYDLSQAKPVSLGEAVGVVAAESIGEPGTQLTMRTFHTGGVAGGGDITMGLPRVIELFEARKPKTQAVVADRDGVVRIEEEEERYLVRIEAEDEAFSSKTPMKISKSLRLIVRDGDHVEAGQPLTRGAINPHDLLLYKDTDAAQRYLVEEVQRVYRSQGVKVHDKHIEVIVRQMLRYVEITDGGDTDLLEGQTVERWEVDQANDALPEGKTPASWKPVLLGITKSSLTTKSWLSAASFQHTTHVLTEASMRGQVDELIGLKENVILGKLIPAGTGLTTVREMQVADERTLEKYGQTSVSTDAVTGSQRYDDTRPSSTSINPSYGD.

Cysteine 57, cysteine 59, cysteine 72, and cysteine 75 together coordinate Zn(2+). The Mg(2+) site is built by aspartate 746, aspartate 748, and aspartate 750. The Zn(2+) site is built by cysteine 1120, cysteine 1201, cysteine 1208, and cysteine 1211. The disordered stretch occupies residues 1502–1537 (LEKYGQTSVSTDAVTGSQRYDDTRPSSTSINPSYGD). 2 stretches are compositionally biased toward polar residues: residues 1506 to 1519 (GQTSVSTDAVTGSQ) and 1526 to 1537 (PSSTSINPSYGD).

It belongs to the RNA polymerase beta' chain family. In terms of assembly, the RNAP catalytic core consists of 2 alpha, 1 beta, 1 beta' and 1 omega subunit. When a sigma factor is associated with the core the holoenzyme is formed, which can initiate transcription. Requires Mg(2+) as cofactor. Zn(2+) serves as cofactor.

The enzyme catalyses RNA(n) + a ribonucleoside 5'-triphosphate = RNA(n+1) + diphosphate. Its function is as follows. DNA-dependent RNA polymerase catalyzes the transcription of DNA into RNA using the four ribonucleoside triphosphates as substrates. The protein is DNA-directed RNA polymerase subunit beta' of Deinococcus geothermalis (strain DSM 11300 / CIP 105573 / AG-3a).